Here is a 339-residue protein sequence, read N- to C-terminus: Methionine import ATP-binding protein MetN 2 (339 aa).

Residues 2–241 (ISFNNVSKVY…PKTTTTQNFV (240 aa)) enclose the ABC transporter domain. 38–45 (GFSGAGKS) is a binding site for ATP.

This sequence belongs to the ABC transporter superfamily. Methionine importer (TC 3.A.1.24) family. The complex is composed of two ATP-binding proteins (MetN), two transmembrane proteins (MetI) and a solute-binding protein (MetQ).

Its subcellular location is the cell membrane. It catalyses the reaction L-methionine(out) + ATP + H2O = L-methionine(in) + ADP + phosphate + H(+). It carries out the reaction D-methionine(out) + ATP + H2O = D-methionine(in) + ADP + phosphate + H(+). Its function is as follows. Part of the ABC transporter complex MetNIQ involved in methionine import. Responsible for energy coupling to the transport system. The protein is Methionine import ATP-binding protein MetN 2 of Bacillus anthracis.